The sequence spans 248 residues: Granulin (248 aa).

It belongs to the polyhedrin family.

Component of the virus occlusion bodies, which are large proteinaceous structures, that protect the virus from the outside environment for extended periods until they are ingested by insect larvae. The chain is Granulin from Adoxophyes orana granulovirus (AoGV).